The sequence spans 588 residues: Aspartate--tRNA ligase (588 aa).

L-aspartate is bound at residue Glu-177. Residues 201 to 204 (QLFK) form an aspartate region. Arg-223 is an L-aspartate binding site. Residues 223-225 (RDE) and Gln-232 contribute to the ATP site. Position 451 (His-451) interacts with L-aspartate. An ATP-binding site is contributed by Glu-485. An L-aspartate-binding site is contributed by Arg-492. Residue 537–540 (GLDR) participates in ATP binding.

This sequence belongs to the class-II aminoacyl-tRNA synthetase family. Type 1 subfamily. In terms of assembly, homodimer.

It is found in the cytoplasm. It catalyses the reaction tRNA(Asp) + L-aspartate + ATP = L-aspartyl-tRNA(Asp) + AMP + diphosphate. In terms of biological role, catalyzes the attachment of L-aspartate to tRNA(Asp) in a two-step reaction: L-aspartate is first activated by ATP to form Asp-AMP and then transferred to the acceptor end of tRNA(Asp). This is Aspartate--tRNA ligase from Staphylococcus carnosus (strain TM300).